The following is a 129-amino-acid chain: Small ribosomal subunit protein uS11 (129 aa).

It belongs to the universal ribosomal protein uS11 family. Part of the 30S ribosomal subunit. Interacts with proteins S7 and S18. Binds to IF-3.

Functionally, located on the platform of the 30S subunit, it bridges several disparate RNA helices of the 16S rRNA. Forms part of the Shine-Dalgarno cleft in the 70S ribosome. This Brucella abortus (strain S19) protein is Small ribosomal subunit protein uS11.